A 299-amino-acid chain; its full sequence is Protein-methionine-sulfoxide reductase catalytic subunit MsrP (299 aa).

The tat-type signal signal peptide spans 1-44; the sequence is MAHRWINDLTPADITPRGAWMNRRQVMAGMAGAGLAAFAGSAQA. Mo-molybdopterin contacts are provided by residues N59, 62 to 63, C117, T152, N200, R205, and 216 to 218; these read YE and SIK.

This sequence belongs to the MsrP family. Heterodimer of a catalytic subunit (MsrP) and a heme-binding subunit (MsrQ). Mo-molybdopterin is required as a cofactor. Post-translationally, predicted to be exported by the Tat system. The position of the signal peptide cleavage has not been experimentally proven.

The protein localises to the periplasm. It carries out the reaction L-methionyl-[protein] + a quinone + H2O = L-methionyl-(S)-S-oxide-[protein] + a quinol. It catalyses the reaction L-methionyl-[protein] + a quinone + H2O = L-methionyl-(R)-S-oxide-[protein] + a quinol. Its function is as follows. Part of the MsrPQ system that repairs oxidized periplasmic proteins containing methionine sulfoxide residues (Met-O), using respiratory chain electrons. Thus protects these proteins from oxidative-stress damage caused by reactive species of oxygen and chlorine generated by the host defense mechanisms. MsrPQ is essential for the maintenance of envelope integrity under bleach stress, rescuing a wide series of structurally unrelated periplasmic proteins from methionine oxidation. The catalytic subunit MsrP is non-stereospecific, being able to reduce both (R-) and (S-) diastereoisomers of methionine sulfoxide. This chain is Protein-methionine-sulfoxide reductase catalytic subunit MsrP, found in Ruegeria pomeroyi (strain ATCC 700808 / DSM 15171 / DSS-3) (Silicibacter pomeroyi).